The sequence spans 283 residues: Probable cytochrome c oxidase subunit 3 (283 aa).

The next 6 membrane-spanning stretches (helical) occupy residues 26–46 (PWPVLTSFALLLLVIGGVSFM), 51–71 (FNIYILSAGIISVGYCLYSWW), 94–114 (IGMALFILTEIVFFGVFFASF), 179–199 (CVTALALTILLGIFFTTMQAY), 217–237 (FYLATGFHGAHVIIGTIFLII), and 261–281 (AWYWHFVDVVWLFLFTFVYIF).

The protein belongs to the cytochrome c oxidase subunit 3 family.

The protein localises to the cell membrane. It carries out the reaction 4 Fe(II)-[cytochrome c] + O2 + 8 H(+)(in) = 4 Fe(III)-[cytochrome c] + 2 H2O + 4 H(+)(out). The sequence is that of Probable cytochrome c oxidase subunit 3 (ctaE) from Rickettsia conorii (strain ATCC VR-613 / Malish 7).